Consider the following 91-residue polypeptide: Cell division protein CrgA (91 aa).

A compositionally biased stretch (polar residues) spans 1–24 (MPKSKITTEGSALPQSSSSATNRT). Residues 1–28 (MPKSKITTEGSALPQSSSSATNRTPVKI) form a disordered region. Helical transmembrane passes span 38-58 (IAIMLGLMLLGLLWLVVNYLA) and 68-88 (LGPWNYGIGFGLAIIGLLMTM).

The protein belongs to the CrgA family.

The protein localises to the cell membrane. Functionally, involved in cell division. In Corynebacterium aurimucosum (strain ATCC 700975 / DSM 44827 / CIP 107346 / CN-1) (Corynebacterium nigricans), this protein is Cell division protein CrgA.